Consider the following 89-residue polypeptide: Mapacalcine (89 aa).

Q89 is subject to Glutamine amide.

As to quaternary structure, homodimer. Contains disulfide bonds which may also be involved in dimerization.

Functionally, blocks calcium currents via interaction with a yet unknown target protein. Has no effect on L-type, T-type, N-type or P/Q-type voltage-gated calcium channels (VGCC). Has no effect on voltage-gated potassium or chloride channels. Blocks non-L-type VGCC calcium currents in mouse duodenal myocytes (IC(50)=0.2 uM). Blocks calcium influx induced by hypoxia/reoxygenation in rat hepatocytes. In Pione vastifica (Boring sponge), this protein is Mapacalcine.